The sequence spans 680 residues: Harmonin-binding protein USHBP1 (680 aa).

Residues 1–15 (MSARATRPRSRRGRH) are compositionally biased toward basic residues. 3 disordered regions span residues 1 to 101 (MSAR…GPAE), 135 to 162 (PVEA…GQQE), and 217 to 250 (ASPP…DSPM). A compositionally biased stretch (basic and acidic residues) spans 76–86 (PEERREPEVEA). Coiled coils occupy residues 177–219 (LGTR…EASP), 362–386 (ATNG…VAMD), and 479–506 (LADL…LRAQ). The segment at 524–562 (LMGDGSSGGSSEDPSSEEEAGEDRQQHYQGPPALLGGQM) is disordered. A coiled-coil region spans residues 573–661 (QELSASLTRA…QQAEELAVLT (89 aa)).

It belongs to the MCC family. In terms of assembly, interacts via its C-terminus with the first PDZ domain of USH1C.

The polypeptide is Harmonin-binding protein USHBP1 (Rattus norvegicus (Rat)).